A 582-amino-acid chain; its full sequence is Vesicular glutamate transporter 2 (582 aa).

Residues Met1–Tyr71 are Cytoplasmic-facing. The helical transmembrane segment at Ile72–Gly92 threads the bilayer. At Val93–Gly125 the chain is on the vesicular side. Asn100 and Asn101 each carry an N-linked (GlcNAc...) asparagine glycan. The chain crosses the membrane as a helical span at residues Met126–Ala146. Topologically, residues Ser147–Arg148 are cytoplasmic. Residues Leu149–Ile169 traverse the membrane as a helical segment. The Vesicular segment spans residues Pro170–Tyr177. Residues Gly178–Cys198 traverse the membrane as a helical segment. Residues His199–Thr216 lie on the Cytoplasmic side of the membrane. A helical transmembrane segment spans residues Thr217–Val237. Residues Gln238–Ser244 are Vesicular-facing. The chain crosses the membrane as a helical span at residues Val245–Tyr265. The Cytoplasmic portion of the chain corresponds to Glu266 to Met310. Residues Pro311–Ile331 traverse the membrane as a helical segment. The Vesicular segment spans residues Ser332–Gly349. A helical transmembrane segment spans residues Met350–Ala370. Over Asp371 to Lys386 the chain is Cytoplasmic. The chain crosses the membrane as a helical span at residues Ile387–His407. The Vesicular portion of the chain corresponds to Thr408–Arg409. The helical transmembrane segment at Gly410 to Phe430 threads the bilayer. Residues Asn431–Ser443 lie on the Cytoplasmic side of the membrane. The chain crosses the membrane as a helical span at residues Ile444–Val464. The Vesicular segment spans residues Gly465–Gln477. N-linked (GlcNAc...) asparagine glycosylation is present at Asn470. Residues Tyr478–Ala498 traverse the membrane as a helical segment. The Cytoplasmic segment spans residues Ser499 to Ser582.

It belongs to the major facilitator superfamily. Sodium/anion cotransporter family. VGLUT subfamily. As to expression, expressed in brain. Expressed in hippocampal neurons (at protein level).

Its subcellular location is the cytoplasmic vesicle. It is found in the secretory vesicle. The protein resides in the synaptic vesicle membrane. It localises to the synapse. The protein localises to the synaptosome. Its subcellular location is the cell membrane. The enzyme catalyses L-glutamate(out) = L-glutamate(in). The catalysed reaction is K(+)(in) + H(+)(out) = K(+)(out) + H(+)(in). It carries out the reaction 3 Na(+)(out) + phosphate(out) = 3 Na(+)(in) + phosphate(in). It catalyses the reaction phosphate(in) = phosphate(out). The enzyme catalyses chloride(in) = chloride(out). Chloride channel activity is allosterically activated by lumenal H(+) and Cl(-) leading to synaptic vesicles acidification. The L-glutamate transport activity is allosterically activated by lumenal H(+) and Cl(-). The allosteric requirement for H(+) efficiently prevents non-vesicular efflux across the plasma membrane. The L-glutamate uniporter activity exhibits a biphasic dependence on chloride concentration. In terms of biological role, multifunctional transporter that transports L-glutamate as well as multiple ions such as chloride, proton, potassium, sodium and phosphate. At the synaptic vesicle membrane, mainly functions as a uniporter which transports preferentially L-glutamate but also, phosphate from the cytoplasm into synaptic vesicles at presynaptic nerve terminals of excitatory neural cells. The L-glutamate or phosphate uniporter activity is electrogenic and is driven by the proton electrochemical gradient, mainly by the electrical gradient established by the vacuolar H(+)-ATPase across the synaptic vesicle membrane. In addition, functions as a chloride channel that allows a chloride permeation through the synaptic vesicle membrane therefore affects the proton electrochemical gradient and promotes synaptic vesicles acidification. Moreover, functions as a vesicular K(+)/H(+) antiport allowing to maintain the electrical gradient and to decrease chemical gradient and therefore sustain vesicular glutamate uptake. The vesicular H(+)/H(+) antiport activity is electroneutral. At the plasma membrane, following exocytosis, functions as a symporter of Na(+) and phosphate from the extracellular space to the cytoplasm allowing synaptic phosphate homeostasis regulation. The symporter activity is driven by an inside negative membrane potential and is electrogenic. Also involved in the regulation of retinal hyaloid vessel regression during postnatal development. May also play a role in the endocrine glutamatergic system of other tissues such as pineal gland and pancreas. The polypeptide is Vesicular glutamate transporter 2 (Mus musculus (Mouse)).